Here is a 430-residue protein sequence, read N- to C-terminus: Tyrosine--tRNA ligase (430 aa).

Tyr32 is a binding site for L-tyrosine. The 'HIGH' region motif lies at 37–46; the sequence is PTADSLHIGH. The L-tyrosine site is built by Tyr172 and Gln176. The short motif at 232–236 is the 'KMSKS' region element; the sequence is KFGKT. Residue Lys235 participates in ATP binding. Positions 362–429 constitute an S4 RNA-binding domain; sequence VKAVDLFVDN…GKKNYYLIIA (68 aa).

This sequence belongs to the class-I aminoacyl-tRNA synthetase family. TyrS type 1 subfamily. As to quaternary structure, homodimer.

The protein resides in the cytoplasm. It catalyses the reaction tRNA(Tyr) + L-tyrosine + ATP = L-tyrosyl-tRNA(Tyr) + AMP + diphosphate + H(+). Functionally, catalyzes the attachment of tyrosine to tRNA(Tyr) in a two-step reaction: tyrosine is first activated by ATP to form Tyr-AMP and then transferred to the acceptor end of tRNA(Tyr). The chain is Tyrosine--tRNA ligase from Bacteroides fragilis (strain ATCC 25285 / DSM 2151 / CCUG 4856 / JCM 11019 / LMG 10263 / NCTC 9343 / Onslow / VPI 2553 / EN-2).